The sequence spans 126 residues: Putative lipoprotein LprD (126 aa).

A signal peptide spans 1–19 (MSTTRRRRPALVALVTIAA). The N-palmitoyl cysteine moiety is linked to residue Cys-20. A lipid anchor (S-diacylglycerol cysteine) is attached at Cys-20. The helical transmembrane segment at 44–64 (GYALQWPLFAGFCLYTYHNFV) threads the bilayer.

This sequence to M.tuberculosis Rv1343c.

The protein resides in the cell membrane. This chain is Putative lipoprotein LprD (lprD), found in Mycobacterium leprae (strain TN).